Consider the following 203-residue polypeptide: MRLSLRHITWLKIAIWLAATLPLLWLVLSINLGGLSADPAKDIQHFTGRMALKLLLATLLVSPLARYSKQPLLLRCRRLLGLWCFAWGTLHLLSYSILELGLSNIGLLGHELINRPYLTLGIISWLVLLALALTSTRWAQRKMGARWQKLHNWVYVVAILAPIHYLWSVKTLSPWPIIYAVMAALLLLLRYKLLLPRYKKFRQ.

5 helical membrane passes run 13–33 (IAIW…INLG), 79–99 (LLGL…SILE), 116–136 (PYLT…LTST), 147–167 (WQKL…HYLW), and 169–189 (VKTL…LLLL).

This sequence belongs to the MsrQ family. Heterodimer of a catalytic subunit (MsrP) and a heme-binding subunit (MsrQ). The cofactor is FMN. Requires heme b as cofactor.

The protein resides in the cell inner membrane. Functionally, part of the MsrPQ system that repairs oxidized periplasmic proteins containing methionine sulfoxide residues (Met-O), using respiratory chain electrons. Thus protects these proteins from oxidative-stress damage caused by reactive species of oxygen and chlorine generated by the host defense mechanisms. MsrPQ is essential for the maintenance of envelope integrity under bleach stress, rescuing a wide series of structurally unrelated periplasmic proteins from methionine oxidation. MsrQ provides electrons for reduction to the reductase catalytic subunit MsrP, using the quinone pool of the respiratory chain. The polypeptide is Protein-methionine-sulfoxide reductase heme-binding subunit MsrQ (Yersinia pseudotuberculosis serotype O:1b (strain IP 31758)).